Here is a 76-residue protein sequence, read N- to C-terminus: Small ribosomal subunit protein bS18 (76 aa).

Belongs to the bacterial ribosomal protein bS18 family. In terms of assembly, part of the 30S ribosomal subunit. Forms a tight heterodimer with protein bS6.

In terms of biological role, binds as a heterodimer with protein bS6 to the central domain of the 16S rRNA, where it helps stabilize the platform of the 30S subunit. In Stutzerimonas stutzeri (strain A1501) (Pseudomonas stutzeri), this protein is Small ribosomal subunit protein bS18.